A 632-amino-acid chain; its full sequence is Tail spike protein (632 aa).

The Peptidase S74 domain occupies 505 to 630; that stretch reads SDARCKTEPL…KRMQEALAAL (126 aa).

In terms of assembly, homotrimer. Post-translationally, proteolytic cleavage and release of the chaperone in the host cytosol stabilizes the folded protein. The cleavage gives rise to the mature tail spike protein but is not essential for catalytic activity.

It localises to the virion. Functions as a receptor binding protein (RBP) and probably mediates the attachment to the host capsular exopolysaccharides. Displays a depolymerase activity that specifically degrades the K5-type polysaccharides of Escherichia coli capsule. In terms of biological role, the C-terminal chaperone protein mediates homotrimerization and proper folding of the catalytic trimer. This is Tail spike protein (kflA) from Escherichia virus K5 (Bacteriophage K5).